A 78-amino-acid polypeptide reads, in one-letter code: Calcium/calmodulin-dependent protein kinase II inhibitor 1 (78 aa).

Positions 41-68 (SKRPPKLGQIGRSKRVVIEDDRIDDVLK) are CAMK2 inhibitory domain.

It belongs to the CAMK2N family. Interacts with CAMK2B; the presence of Ca(2+)/calmodulin increases the interaction but is not essential. Interacts with CAMK2A; this interaction requires CAMK2A activation by Ca(2+). Expressed in the brain (at protein level). Expressed in cardiomyocytes but not cardiac fibroblasts (at protein level).

Its subcellular location is the synapse. The protein resides in the cell projection. It is found in the dendrite. The protein localises to the postsynaptic density. Functionally, potent and specific inhibitor of CaM-kinase II (CAMK2). Plays a role in the maintenance of long-term retrieval-induced memory in response to contextual fear. Modulates blood pressure and vascular reactivity via regulation of CAMK2 activity in addition to regulation of left ventricular mass. Mediates the NLRP3 inflammasome in cardiomyocytes via acting as an inhibitor of the MAPK14/p38 and MAPK8/JNK pathways, thereby regulating ventricular remodeling and cardiac rhythm post-myocardial infarction. Negatively effects insulin sensitivity and promotes lipid formation in adipose tissues independent of CAMK2 signaling. The protein is Calcium/calmodulin-dependent protein kinase II inhibitor 1 (Camk2n1) of Mus musculus (Mouse).